Here is a 569-residue protein sequence, read N- to C-terminus: Proline--tRNA ligase (569 aa).

This sequence belongs to the class-II aminoacyl-tRNA synthetase family. ProS type 1 subfamily. Homodimer.

The protein resides in the cytoplasm. The catalysed reaction is tRNA(Pro) + L-proline + ATP = L-prolyl-tRNA(Pro) + AMP + diphosphate. Catalyzes the attachment of proline to tRNA(Pro) in a two-step reaction: proline is first activated by ATP to form Pro-AMP and then transferred to the acceptor end of tRNA(Pro). As ProRS can inadvertently accommodate and process non-cognate amino acids such as alanine and cysteine, to avoid such errors it has two additional distinct editing activities against alanine. One activity is designated as 'pretransfer' editing and involves the tRNA(Pro)-independent hydrolysis of activated Ala-AMP. The other activity is designated 'posttransfer' editing and involves deacylation of mischarged Ala-tRNA(Pro). The misacylated Cys-tRNA(Pro) is not edited by ProRS. This is Proline--tRNA ligase from Campylobacter hominis (strain ATCC BAA-381 / DSM 21671 / CCUG 45161 / LMG 19568 / NCTC 13146 / CH001A).